A 286-amino-acid polypeptide reads, in one-letter code: Putative short-chain type dehydrogenase/reductase Rv0148 (286 aa).

11 to 35 (VTGAGGGLGREYALTLAGEGASVVV) is a binding site for NAD(+). Ser-151 contributes to the substrate binding site. The active-site Proton acceptor is the Tyr-164. Lys-280 participates in a covalent cross-link: Isoglutamyl lysine isopeptide (Lys-Gln) (interchain with Q-Cter in protein Pup).

The protein belongs to the short-chain dehydrogenases/reductases (SDR) family. In terms of processing, pupylated at Lys-280 by the prokaryotic ubiquitin-like protein Pup, which probably leads to its degradation by the proteasome.

This is Putative short-chain type dehydrogenase/reductase Rv0148 from Mycobacterium tuberculosis (strain ATCC 25618 / H37Rv).